Reading from the N-terminus, the 77-residue chain is Large ribosomal subunit protein bL28 (77 aa).

The protein belongs to the bacterial ribosomal protein bL28 family.

In Ralstonia pickettii (strain 12J), this protein is Large ribosomal subunit protein bL28.